Reading from the N-terminus, the 360-residue chain is Phospho-N-acetylmuramoyl-pentapeptide-transferase (360 aa).

A run of 10 helical transmembrane segments spans residues 25 to 45 (RGIL…PWMI), 73 to 93 (TMGG…WADL), 97 to 117 (YVWV…VDDY), 134 to 154 (YFWQ…TAPT), 168 to 188 (VTIP…VGSS), 199 to 219 (GLAI…CYLS), 236 to 256 (SGEL…FLWF), 263 to 283 (VFMG…IAVI), 288 to 308 (IVLF…VIQV), and 338 to 358 (VIVR…ATLK).

Belongs to the glycosyltransferase 4 family. MraY subfamily. Mg(2+) serves as cofactor.

The protein localises to the cell inner membrane. It catalyses the reaction UDP-N-acetyl-alpha-D-muramoyl-L-alanyl-gamma-D-glutamyl-meso-2,6-diaminopimeloyl-D-alanyl-D-alanine + di-trans,octa-cis-undecaprenyl phosphate = di-trans,octa-cis-undecaprenyl diphospho-N-acetyl-alpha-D-muramoyl-L-alanyl-D-glutamyl-meso-2,6-diaminopimeloyl-D-alanyl-D-alanine + UMP. The protein operates within cell wall biogenesis; peptidoglycan biosynthesis. Functionally, catalyzes the initial step of the lipid cycle reactions in the biosynthesis of the cell wall peptidoglycan: transfers peptidoglycan precursor phospho-MurNAc-pentapeptide from UDP-MurNAc-pentapeptide onto the lipid carrier undecaprenyl phosphate, yielding undecaprenyl-pyrophosphoryl-MurNAc-pentapeptide, known as lipid I. The polypeptide is Phospho-N-acetylmuramoyl-pentapeptide-transferase (Pseudomonas putida (strain ATCC 700007 / DSM 6899 / JCM 31910 / BCRC 17059 / LMG 24140 / F1)).